A 564-amino-acid chain; its full sequence is Urocanate hydratase (564 aa).

Residues 58 to 59, glutamine 136, 182 to 184, glutamate 202, arginine 207, 245 to 246, 266 to 270, 276 to 277, and tyrosine 325 each bind NAD(+); these read GG, GMG, NA, QTSAH, and YL. The active site involves cysteine 413. Residue glycine 495 participates in NAD(+) binding.

This sequence belongs to the urocanase family. NAD(+) serves as cofactor.

The protein resides in the cytoplasm. It carries out the reaction 4-imidazolone-5-propanoate = trans-urocanate + H2O. It participates in amino-acid degradation; L-histidine degradation into L-glutamate; N-formimidoyl-L-glutamate from L-histidine: step 2/3. Functionally, catalyzes the conversion of urocanate to 4-imidazolone-5-propionate. The protein is Urocanate hydratase of Vibrio atlanticus (strain LGP32) (Vibrio splendidus (strain Mel32)).